A 599-amino-acid polypeptide reads, in one-letter code: MKHIRNFSIIAHIDHGKSTLSDRIIQICGGLSEREMAAQVLDSMDLERERGITIKAQSVTLDYHSKDGQTYQLNFIDTPGHVDFSYEVSRSLAACEGALLVVDAGQGVEAQTLANCYTAMEMDLEVVPVLNKIDLPAADPERVAEEIEDIVGIDATDAIRCSAKTGVGVPDVLERLVRDIPAPEGDPNGPLQALIIDSWFDNYLGVVSLIRIKNGSLRKGDKVKVMSTGQSYNADRLGIFTPKRVDRDVLNCGEVGWLVCAIKDILGAPVGDTLTLTRNPAEKSLPGFKKVKPQVYAGLFPISSDDYESFRDALGKLSLNDASLFYEPESSTALGFGFRCGFLGLLHMEIIQERLEREYDLELITTAPTVVYEVITTNQETVYVDSPSKLPALNNIEELREPIAECHMLLPQEYLGNVITLCIEKRGTQTNMVYHGKQVALTYEIPMAEVVLDFFDRLKSTSRGYASLDYNFKRFQTSDMVRVDVLINNERVDALALITHRDNAQYRGRDLVEKMKELIPRQQFDIAIQAAIGNHIIARSTVKQLRKNVLAKCYGGDVSRKKKLLQKQKDGKKRMKQVGNVELPQEAFLAILHVGKDSK.

The 183-residue stretch at 2 to 184 (KHIRNFSIIA…RLVRDIPAPE (183 aa)) folds into the tr-type G domain. Residues 14–19 (DHGKST) and 131–134 (NKID) contribute to the GTP site.

It belongs to the TRAFAC class translation factor GTPase superfamily. Classic translation factor GTPase family. LepA subfamily.

Its subcellular location is the cell inner membrane. The enzyme catalyses GTP + H2O = GDP + phosphate + H(+). In terms of biological role, required for accurate and efficient protein synthesis under certain stress conditions. May act as a fidelity factor of the translation reaction, by catalyzing a one-codon backward translocation of tRNAs on improperly translocated ribosomes. Back-translocation proceeds from a post-translocation (POST) complex to a pre-translocation (PRE) complex, thus giving elongation factor G a second chance to translocate the tRNAs correctly. Binds to ribosomes in a GTP-dependent manner. This chain is Elongation factor 4, found in Yersinia pestis bv. Antiqua (strain Antiqua).